A 157-amino-acid chain; its full sequence is Transcriptional repressor NrdR (157 aa).

The tract at residues 1-21 is disordered; sequence MRCPYCSSEDSQVKDSRPAED. A zinc finger spans residues 3–34; that stretch reads CPYCSSEDSQVKDSRPAEDGNAIRRRRICPDC. Positions 11-21 are enriched in basic and acidic residues; it reads SQVKDSRPAED. One can recognise an ATP-cone domain in the interval 49-139; it reads LMIIKKTGRK…VYRDFSHAED (91 aa).

It belongs to the NrdR family. Zn(2+) serves as cofactor.

In terms of biological role, negatively regulates transcription of bacterial ribonucleotide reductase nrd genes and operons by binding to NrdR-boxes. The chain is Transcriptional repressor NrdR from Sinorhizobium fredii (strain NBRC 101917 / NGR234).